The chain runs to 161 residues: Ribonuclease H (161 aa).

Residues 3–144 (GLKQISIYTD…CDDLARQAAE (142 aa)) form the RNase H type-1 domain. Mg(2+) is bound by residues Asp-12, Glu-50, Asp-72, and Asp-136. Residues 133–161 (ERCDDLARQAAEAKPSQEDSGYINQQAQA) form a disordered region. The span at 150–161 (EDSGYINQQAQA) shows a compositional bias: polar residues.

The protein belongs to the RNase H family. As to quaternary structure, monomer. The cofactor is Mg(2+).

The protein resides in the cytoplasm. It catalyses the reaction Endonucleolytic cleavage to 5'-phosphomonoester.. Functionally, endonuclease that specifically degrades the RNA of RNA-DNA hybrids. The polypeptide is Ribonuclease H (Shewanella halifaxensis (strain HAW-EB4)).